The primary structure comprises 124 residues: Ribonuclease P protein component (124 aa).

Belongs to the RnpA family. Consists of a catalytic RNA component (M1 or rnpB) and a protein subunit.

It catalyses the reaction Endonucleolytic cleavage of RNA, removing 5'-extranucleotides from tRNA precursor.. Functionally, RNaseP catalyzes the removal of the 5'-leader sequence from pre-tRNA to produce the mature 5'-terminus. It can also cleave other RNA substrates such as 4.5S RNA. The protein component plays an auxiliary but essential role in vivo by binding to the 5'-leader sequence and broadening the substrate specificity of the ribozyme. This is Ribonuclease P protein component from Maridesulfovibrio salexigens (strain ATCC 14822 / DSM 2638 / NCIMB 8403 / VKM B-1763) (Desulfovibrio salexigens).